A 1063-amino-acid polypeptide reads, in one-letter code: E3 ubiquitin-protein ligase PDZRN3 (1063 aa).

Residues 18-56 (CALCHKVLEDPLTTPCGHVFCAGCVLPWVVQEGSCPARC) form an RING-type; degenerate zinc finger. The segment at 100–158 (EHLERCDFAPARCRHAGCGQLLLRRDVEAHMRDACDARPVGRCQEGCGLPLTHGEQRAG) adopts a TRAF-type zinc-finger fold. 2 consecutive PDZ domains span residues 249–339 (TLVL…LRRT) and 419–503 (EVGL…IARP). A Phosphoserine modification is found at Ser427. The tract at residues 545–602 (QKKHEEDGGTTDTATILSNQHEKDSGVGRTDESTRNDESSEQENNGEDATASANPLAG) is disordered. Over residues 554 to 563 (TTDTATILSN) the composition is skewed to polar residues. A compositionally biased stretch (basic and acidic residues) spans 564 to 582 (QHEKDSGVGRTDESTRNDE). Residues 680–705 (ESVDKELELLNEELRSIELECLSIVR) adopt a coiled-coil conformation. The span at 746-755 (ELPEKSDKDS) shows a compositional bias: basic and acidic residues. 2 disordered regions span residues 746 to 798 (ELPE…IEAY) and 834 to 853 (IKER…PKLG). A compositionally biased stretch (polar residues) spans 756-770 (SSAYNTGESCRSTPL).

As to quaternary structure, interacts with NLGN1 and EFNB2. Interacts with UBE2D2 and with MUSK via the first PDZ domain. In myotubes, the interaction between PDZRN3 and MUSK is enhanced upon agrin stimulation. Post-translationally, auto-ubiquitinated. Highly expressed in skeletal and cardiac muscle and at lower levels in spinal cord and brain (at protein level). Also expressed in kidney and lung. In muscles, concentrated at the neuromuscular junction (NMJ).

It is found in the synapse. Its subcellular location is the cytoplasm. The enzyme catalyses S-ubiquitinyl-[E2 ubiquitin-conjugating enzyme]-L-cysteine + [acceptor protein]-L-lysine = [E2 ubiquitin-conjugating enzyme]-L-cysteine + N(6)-ubiquitinyl-[acceptor protein]-L-lysine.. It participates in protein modification; protein ubiquitination. In terms of biological role, E3 ubiquitin-protein ligase. Plays an important role in regulating the surface level of MUSK on myotubes. Mediates the ubiquitination of MUSK, promoting its endocytosis and lysosomal degradation. Might contribute to terminal myogenic differentiation. This chain is E3 ubiquitin-protein ligase PDZRN3 (Pdzrn3), found in Mus musculus (Mouse).